Here is a 426-residue protein sequence, read N- to C-terminus: Chaperone SurA (426 aa).

The N-terminal stretch at 1–19 (MGRVLVTIFVLFWPIGSFA) is a signal peptide. PpiC domains follow at residues 169 to 270 (DAQY…KLLD) and 280 to 379 (VTQT…QVLD).

The protein resides in the periplasm. It catalyses the reaction [protein]-peptidylproline (omega=180) = [protein]-peptidylproline (omega=0). Chaperone involved in the correct folding and assembly of outer membrane proteins. Recognizes specific patterns of aromatic residues and the orientation of their side chains, which are found more frequently in integral outer membrane proteins. May act in both early periplasmic and late outer membrane-associated steps of protein maturation. The sequence is that of Chaperone SurA from Nitrosococcus oceani (strain ATCC 19707 / BCRC 17464 / JCM 30415 / NCIMB 11848 / C-107).